We begin with the raw amino-acid sequence, 199 residues long: Recombination protein RecR (199 aa).

A C4-type zinc finger spans residues 57-72 (CSQCHNITDTDPCQIC). The region spanning 80 to 176 (TTICVVQESR…KVTRLAHGLP (97 aa)) is the Toprim domain.

This sequence belongs to the RecR family.

May play a role in DNA repair. It seems to be involved in an RecBC-independent recombinational process of DNA repair. It may act with RecF and RecO. The protein is Recombination protein RecR of Shouchella clausii (strain KSM-K16) (Alkalihalobacillus clausii).